We begin with the raw amino-acid sequence, 338 residues long: Ketol-acid reductoisomerase (NADP(+)) (338 aa).

One can recognise a KARI N-terminal Rossmann domain in the interval methionine 1 to threonine 181. NADP(+) contacts are provided by residues tyrosine 24 to glutamine 27, arginine 47, serine 50, threonine 52, and aspartate 82 to glutamine 85. Residue histidine 107 is part of the active site. Glycine 133 is an NADP(+) binding site. Residues threonine 182 to isoleucine 327 form the KARI C-terminal knotted domain. Aspartate 190, glutamate 194, glutamate 226, and glutamate 230 together coordinate Mg(2+). Serine 251 contributes to the substrate binding site.

It belongs to the ketol-acid reductoisomerase family. Mg(2+) serves as cofactor.

The catalysed reaction is (2R)-2,3-dihydroxy-3-methylbutanoate + NADP(+) = (2S)-2-acetolactate + NADPH + H(+). The enzyme catalyses (2R,3R)-2,3-dihydroxy-3-methylpentanoate + NADP(+) = (S)-2-ethyl-2-hydroxy-3-oxobutanoate + NADPH + H(+). It participates in amino-acid biosynthesis; L-isoleucine biosynthesis; L-isoleucine from 2-oxobutanoate: step 2/4. The protein operates within amino-acid biosynthesis; L-valine biosynthesis; L-valine from pyruvate: step 2/4. Functionally, involved in the biosynthesis of branched-chain amino acids (BCAA). Catalyzes an alkyl-migration followed by a ketol-acid reduction of (S)-2-acetolactate (S2AL) to yield (R)-2,3-dihydroxy-isovalerate. In the isomerase reaction, S2AL is rearranged via a Mg-dependent methyl migration to produce 3-hydroxy-3-methyl-2-ketobutyrate (HMKB). In the reductase reaction, this 2-ketoacid undergoes a metal-dependent reduction by NADPH to yield (R)-2,3-dihydroxy-isovalerate. This is Ketol-acid reductoisomerase (NADP(+)) from Pseudomonas syringae pv. tomato (strain ATCC BAA-871 / DC3000).